A 109-amino-acid chain; its full sequence is Iron-sulfur cluster assembly protein CyaY (109 aa).

The protein belongs to the frataxin family.

In terms of biological role, involved in iron-sulfur (Fe-S) cluster assembly. May act as a regulator of Fe-S biogenesis. The polypeptide is Iron-sulfur cluster assembly protein CyaY (Shewanella sp. (strain ANA-3)).